The sequence spans 344 residues: Probable pectinesterase 67 (344 aa).

The N-terminal stretch at 1–23 is a signal peptide; sequence MGHRTRMILVLTLVVMSIWGSDA. N-linked (GlcNAc...) asparagine glycans are attached at residues asparagine 43 and asparagine 151. Glutamine 152 contacts substrate. The active-site Nucleophile is aspartate 196. Residue arginine 256 coordinates substrate. N-linked (GlcNAc...) asparagine glycosylation is present at asparagine 282.

This sequence belongs to the pectinesterase family. As to expression, expressed in flower buds.

Its subcellular location is the secreted. The protein localises to the cell wall. The catalysed reaction is [(1-&gt;4)-alpha-D-galacturonosyl methyl ester](n) + n H2O = [(1-&gt;4)-alpha-D-galacturonosyl](n) + n methanol + n H(+). Its pathway is glycan metabolism; pectin degradation; 2-dehydro-3-deoxy-D-gluconate from pectin: step 1/5. Acts in the modification of cell walls via demethylesterification of cell wall pectin. The chain is Probable pectinesterase 67 (PME67) from Arabidopsis thaliana (Mouse-ear cress).